Reading from the N-terminus, the 259-residue chain is Deoxyribose-phosphate aldolase (259 aa).

The Proton donor/acceptor role is filled by Asp-102. Lys-167 acts as the Schiff-base intermediate with acetaldehyde in catalysis. The active-site Proton donor/acceptor is the Lys-201.

This sequence belongs to the DeoC/FbaB aldolase family. DeoC type 2 subfamily.

The protein localises to the cytoplasm. It carries out the reaction 2-deoxy-D-ribose 5-phosphate = D-glyceraldehyde 3-phosphate + acetaldehyde. It functions in the pathway carbohydrate degradation; 2-deoxy-D-ribose 1-phosphate degradation; D-glyceraldehyde 3-phosphate and acetaldehyde from 2-deoxy-alpha-D-ribose 1-phosphate: step 2/2. Catalyzes a reversible aldol reaction between acetaldehyde and D-glyceraldehyde 3-phosphate to generate 2-deoxy-D-ribose 5-phosphate. This chain is Deoxyribose-phosphate aldolase, found in Escherichia coli O8 (strain IAI1).